The sequence spans 52 residues: Disintegrin multisquamatin (52 aa).

In terms of domain architecture, Disintegrin spans 1–50 (EGEECESGPCCRNCKFLKEGTICKRARGDDMDDYCNGKTCDCPRNPHKGP). 4 disulfide bridges follow: Cys-5-Cys-14, Cys-10-Cys-35, Cys-11-Cys-40, and Cys-23-Cys-42. Positions 27 to 29 (RGD) match the Cell attachment site motif.

It belongs to the venom metalloproteinase (M12B) family. P-II subfamily. P-IIa sub-subfamily. Monomer. As to expression, expressed by the venom gland.

It localises to the secreted. Inhibits ADP-induced human, canine and rabbit platelet aggregation by binding with high affinity to alpha-IIb/beta-3 (ITGA2B/ITGB3). In Echis multisquamatus (Central Asian sand viper), this protein is Disintegrin multisquamatin.